Here is a 72-residue protein sequence, read N- to C-terminus: UPF0352 protein swp_2271 (72 aa).

This sequence belongs to the UPF0352 family.

This Shewanella piezotolerans (strain WP3 / JCM 13877) protein is UPF0352 protein swp_2271.